The sequence spans 230 residues: Small ribosomal subunit protein uS3 (230 aa).

In terms of domain architecture, KH type-2 spans 39 to 107 (VRNYLFKKLI…PVHINIEEIK (69 aa)).

It belongs to the universal ribosomal protein uS3 family. As to quaternary structure, part of the 30S ribosomal subunit. Forms a tight complex with proteins S10 and S14.

In terms of biological role, binds the lower part of the 30S subunit head. Binds mRNA in the 70S ribosome, positioning it for translation. The polypeptide is Small ribosomal subunit protein uS3 (Vesicomyosocius okutanii subsp. Calyptogena okutanii (strain HA)).